The sequence spans 609 residues: NADH-ubiquinone oxidoreductase chain 5 (609 aa).

16 helical membrane-spanning segments follow: residues 3–23 (VINL…LPIV), 41–61 (TAIS…IYSG), 90–110 (MIFV…SMWY), 115–135 (PFIN…MILV), 140–160 (LFQL…LIGW), 174–194 (AVLY…WFLI), 214–236 (VPLM…HPWL), 244–264 (TPVS…FLLI), 276–296 (MQTT…ICAL), 304–323 (IIAF…IGIN), 328–350 (AFLH…GSII), 368–388 (VLPF…GMPF), 410–432 (WALL…IMFF), 460–480 (LLLG…PTST), 491–511 (LMAL…NLTS), and 585–605 (GLIK…LMMI).

It belongs to the complex I subunit 5 family. In terms of assembly, core subunit of respiratory chain NADH dehydrogenase (Complex I) which is composed of 45 different subunits.

Its subcellular location is the mitochondrion inner membrane. It carries out the reaction a ubiquinone + NADH + 5 H(+)(in) = a ubiquinol + NAD(+) + 4 H(+)(out). Functionally, core subunit of the mitochondrial membrane respiratory chain NADH dehydrogenase (Complex I) which catalyzes electron transfer from NADH through the respiratory chain, using ubiquinone as an electron acceptor. Essential for the catalytic activity and assembly of complex I. This is NADH-ubiquinone oxidoreductase chain 5 (MT-ND5) from Halichoerus grypus (Gray seal).